We begin with the raw amino-acid sequence, 141 residues long: VLSPGDKSNIKAAWGKIGGQAPQYGAEALERMFLSFPTTKTYFPHFDMSHGSAQIQAHGKKVADALSTAVGHLDDLPTALSALSDLHAHKLRVDPANFKLLSHCILVTLACHHPGDFTPEIHASLDKFLANVSTVLTSKYR.

Positions 1 to 141 (VLSPGDKSNI…VSTVLTSKYR (141 aa)) constitute a Globin domain. The residue at position 3 (Ser-3) is a Phosphoserine. Lys-7 and Lys-11 each carry N6-succinyllysine. At Lys-16 the chain carries N6-acetyllysine; alternate. Lys-16 carries the post-translational modification N6-succinyllysine; alternate. Phosphotyrosine is present on Tyr-24. Ser-35 carries the phosphoserine modification. Lys-40 carries the post-translational modification N6-succinyllysine. Residue Ser-49 is modified to Phosphoserine. An O2-binding site is contributed by His-58. Position 87 (His-87) interacts with heme b. Ser-102 carries the post-translational modification Phosphoserine. Phosphothreonine is present on Thr-108. At Ser-124 the chain carries Phosphoserine. 2 positions are modified to phosphothreonine: Thr-134 and Thr-137. Phosphoserine is present on Ser-138.

This sequence belongs to the globin family. As to quaternary structure, heterotetramer of two alpha chains and two beta chains. As to expression, red blood cells.

In terms of biological role, involved in oxygen transport from the lung to the various peripheral tissues. Hemopressin acts as an antagonist peptide of the cannabinoid receptor CNR1. Hemopressin-binding efficiently blocks cannabinoid receptor CNR1 and subsequent signaling. The chain is Hemoglobin subunit alpha (HBA) from Tupaia glis (Common tree shrew).